Reading from the N-terminus, the 347-residue chain is D-fructose 1,6-bisphosphatase class 2/sedoheptulose 1,7-bisphosphatase (347 aa).

Asp-33, Glu-57, Asp-97, and Glu-100 together coordinate Mn(2+). Residues 100-102 (EGT), Tyr-131, 176-178 (RDR), and 198-200 (DGD) contribute to the substrate site. Glu-225 contacts Mn(2+).

The protein belongs to the FBPase class 2 family. As to quaternary structure, homotetramer. Requires Mn(2+) as cofactor.

The catalysed reaction is beta-D-fructose 1,6-bisphosphate + H2O = beta-D-fructose 6-phosphate + phosphate. It catalyses the reaction D-sedoheptulose 1,7-bisphosphate + H2O = D-sedoheptulose 7-phosphate + phosphate. The protein operates within carbohydrate biosynthesis; Calvin cycle. Functionally, catalyzes the hydrolysis of fructose 1,6-bisphosphate (Fru 1,6-P2) and sedoheptulose 1,7-bisphosphate (Sed 1,7-P2) to fructose 6-phosphate and sedoheptulose 7-phosphate, respectively. The chain is D-fructose 1,6-bisphosphatase class 2/sedoheptulose 1,7-bisphosphatase from Thermosynechococcus vestitus (strain NIES-2133 / IAM M-273 / BP-1).